We begin with the raw amino-acid sequence, 150 residues long: Troponin C, isoform 1 (150 aa).

At Met-1 the chain carries N-acetylmethionine. EF-hand domains follow at residues 7–42, 43–78, 83–118, and 119–150; these read DQVQALQKAFNSFDTDDKGFITPDTVGVILRMMGVK, ISDRHLQEVISETDEDGSGEIEFEEFAALAAKFLSE, ALKKELKEAFRIYDRGGNGYITVHTLKEILRELDNK, and LTEDNLDSIIEEVDEDGSGTIDFNEFMKMMNG. Residues Asp-56, Asp-58, Ser-60, Glu-62, and Glu-67 each contribute to the Ca(2+) site. Ca(2+) is bound by residues Asp-132, Asp-134, Ser-136, Thr-138, and Glu-143.

It belongs to the troponin C family.

Its function is as follows. Troponin is the central regulatory protein of striated muscle contraction. Tn consists of three components: Tn-I which is the inhibitor of actomyosin ATPase, Tn-T which contains the binding site for tropomyosin and Tn-C. The binding of calcium to Tn-C abolishes the inhibitory action of Tn on actin filaments. This is Troponin C, isoform 1 from Homarus americanus (American lobster).